The following is a 305-amino-acid chain: MDFISIQQLVSGERVEGKVLGFGHGVPDPGAWPSDWRRGPQEAVAREKLKLEEEKKKKLERFNSTRFNLDNLADLENLVQRRKKRLRHRVPPRKPEPLVKPQSQAQVEPVGLEMFLKAAAENQEYLIDKYLTDGGDPNAHDKLHRTALHWACLKGHSQLVNKLLVAGATVDARDLLDRTPVFWACRGGHLVILKQLLNQGARVNARDKIGSTPLHVAVRTRHPDCLEHLIECGAHLNAQDKEGDTALHEAVRHGSYKAMKLLLLYGAELGVRNAASVTPVQLARDWQRGIREALQAHVAHPRTRC.

The stretch at 41-72 (QEAVAREKLKLEEEKKKKLERFNSTRFNLDNL) forms a coiled coil. Basic residues predominate over residues 83–92 (KKRLRHRVPP). The tract at residues 83 to 104 (KKRLRHRVPPRKPEPLVKPQSQ) is disordered. ANK repeat units follow at residues 143-172 (LHRT…TVDA), 176-205 (LDRT…RVNA), 209-238 (IGST…HLNA), and 242-271 (EGDT…ELGV). Residues 178–195 (RTPVFWACRGGHLVILKQ) form an interaction with TTN region.

As to quaternary structure, interacts with titin/TTN and MYPN. Mainly expressed in heart, skeletal muscle and brown adipose tissues.

Its subcellular location is the nucleus. Functionally, may be involved in the energy metabolism. Could be a molecular link between myofibrillar stretch-induced signaling pathways and muscle gene expression. The chain is Ankyrin repeat domain-containing protein 23 (ANKRD23) from Homo sapiens (Human).